A 360-amino-acid chain; its full sequence is Phospho-N-acetylmuramoyl-pentapeptide-transferase (360 aa).

Helical transmembrane passes span 27-47 (IVSL…LIAW), 72-92 (PTMG…MWAY), 94-114 (SNPY…VGFI), 132-152 (WKYF…FAVG), 168-188 (IMPQ…VGTS), 199-219 (GLAI…AWAT), 235-255 (FAGE…GFLW), 263-283 (VFMG…IAVL), 288-308 (FLLL…ILQV), and 338-358 (VIVR…ATLK).

The protein belongs to the glycosyltransferase 4 family. MraY subfamily. Requires Mg(2+) as cofactor.

Its subcellular location is the cell inner membrane. The enzyme catalyses UDP-N-acetyl-alpha-D-muramoyl-L-alanyl-gamma-D-glutamyl-meso-2,6-diaminopimeloyl-D-alanyl-D-alanine + di-trans,octa-cis-undecaprenyl phosphate = di-trans,octa-cis-undecaprenyl diphospho-N-acetyl-alpha-D-muramoyl-L-alanyl-D-glutamyl-meso-2,6-diaminopimeloyl-D-alanyl-D-alanine + UMP. Its pathway is cell wall biogenesis; peptidoglycan biosynthesis. Catalyzes the initial step of the lipid cycle reactions in the biosynthesis of the cell wall peptidoglycan: transfers peptidoglycan precursor phospho-MurNAc-pentapeptide from UDP-MurNAc-pentapeptide onto the lipid carrier undecaprenyl phosphate, yielding undecaprenyl-pyrophosphoryl-MurNAc-pentapeptide, known as lipid I. The polypeptide is Phospho-N-acetylmuramoyl-pentapeptide-transferase (Sodalis glossinidius (strain morsitans)).